A 775-amino-acid polypeptide reads, in one-letter code: N6-adenosine-methyltransferase non-catalytic subunit MTB (775 aa).

A compositionally biased stretch (basic and acidic residues) spans 1 to 10 (MKKKQEESSL). Disordered stretches follow at residues 1-424 (MKKK…GAIP) and 520-569 (DRGG…EQND). Over residues 40 to 49 (FESSSRSGGS) the composition is skewed to low complexity. Composition is skewed to basic and acidic residues over residues 50–79 (KSKEDNKSVVDVEHQDRDSKRERDGRERTH), 100–117 (DGDHKSSKLSDSRHDSGG), 125–222 (EHGE…LKDN), 229–278 (SSGD…RGEA), and 333–344 (EWAHNQEGRQRS). Positions 375–400 (QRGSTPGRTNFVQTPNRGYQTPQGTR) are enriched in polar residues.

This sequence belongs to the MT-A70-like family. Forms homodimers. Interacts with HAKAI, MTA and VIR. Associates with MTA, FIP37, VIR and HAKAI to form the m6A writer complex which is essential for adenosine methylation at specific mRNA sequences.

Its subcellular location is the nucleus speckle. It is found in the nucleus. It localises to the nucleoplasm. Probable non-catalytic subunit of the N6-methyltransferase complex, a multiprotein complex that mediates N6-methyladenosine (m6A) methylation at the 5'-[AG]GAC-3' consensus sites of some mRNAs. Associates with MTA, FIP37, VIR and HAKAI to form the m6A writer complex which is essential for adenosine methylation at specific mRNA sequences. N6-methyladenosine (m6A) plays a role in mRNA stability, processing, translation efficiency and editing. The protein is N6-adenosine-methyltransferase non-catalytic subunit MTB of Arabidopsis thaliana (Mouse-ear cress).